Reading from the N-terminus, the 288-residue chain is Ankyrin repeat and SOCS box protein 8 (288 aa).

Ser-17 carries the phosphoserine modification. ANK repeat units lie at residues 52 to 81 (GTLK…EVNA), 85 to 113 (YNRT…NPNA), 117 to 146 (NRDT…SVNA), and 150 to 179 (NNDT…EVRV). The 54-residue stretch at 235-288 (QLCEKLTVLCSAPGTLKTLARYTVRRSLGLQYLPDAVKGLPLPASLKEYLLLLE) folds into the SOCS box domain.

This sequence belongs to the ankyrin SOCS box (ASB) family. In terms of assembly, interacts with TBK1; this interaction promotes TBK1 proteasomal degradation. Phosphorylated by TBK1.

Its subcellular location is the cytoplasm. Its pathway is protein modification; protein ubiquitination. In terms of biological role, may be a substrate-recognition component of a SCF-like ECS (Elongin-Cullin-SOCS-box protein) E3 ubiquitin-protein ligase complex which mediates the ubiquitination and subsequent proteasomal degradation of target proteins. Inhibits IFN-beta production through the IRF3 signaling pathway by targeting TBK1 via 'Lys-48'-linked ubiquitination, leading to its proteasomal degradation. The protein is Ankyrin repeat and SOCS box protein 8 (ASB8) of Pongo abelii (Sumatran orangutan).